Consider the following 377-residue polypeptide: F-box protein At2g05970 (377 aa).

Positions 8–55 constitute an F-box domain; the sequence is ASWSELCPDVLRCVFELLSFSDLNRTRSVCSSWHSASRHCVPTQNQIP.

The polypeptide is F-box protein At2g05970 (Arabidopsis thaliana (Mouse-ear cress)).